Here is a 334-residue protein sequence, read N- to C-terminus: Fructose-1,6-bisphosphatase class 1 (334 aa).

Glutamate 89, aspartate 112, leucine 114, and aspartate 115 together coordinate Mg(2+). Substrate is bound by residues 115–118, asparagine 208, tyrosine 241, and lysine 271; that span reads DGSS. Glutamate 277 is a binding site for Mg(2+).

It belongs to the FBPase class 1 family. Homotetramer. Mg(2+) is required as a cofactor.

Its subcellular location is the cytoplasm. It catalyses the reaction beta-D-fructose 1,6-bisphosphate + H2O = beta-D-fructose 6-phosphate + phosphate. Its pathway is carbohydrate biosynthesis; gluconeogenesis. The protein is Fructose-1,6-bisphosphatase class 1 of Serratia proteamaculans (strain 568).